A 525-amino-acid chain; its full sequence is GMP synthase [glutamine-hydrolyzing] (525 aa).

One can recognise a Glutamine amidotransferase type-1 domain in the interval 9–207 (RILILDFGSQ…VLTISGCEAL (199 aa)). C86 (nucleophile) is an active-site residue. Catalysis depends on residues H181 and E183. Residues 208-400 (WTPAKIVDDA…LGLPYDMVYR (193 aa)) enclose the GMPS ATP-PPase domain. Residue 235-241 (SGGVDSS) coordinates ATP.

In terms of assembly, homodimer.

The enzyme catalyses XMP + L-glutamine + ATP + H2O = GMP + L-glutamate + AMP + diphosphate + 2 H(+). Its pathway is purine metabolism; GMP biosynthesis; GMP from XMP (L-Gln route): step 1/1. Its function is as follows. Catalyzes the synthesis of GMP from XMP. The chain is GMP synthase [glutamine-hydrolyzing] from Marinobacter nauticus (strain ATCC 700491 / DSM 11845 / VT8) (Marinobacter aquaeolei).